The primary structure comprises 397 residues: Succinyl-diaminopimelate desuccinylase (397 aa).

His74 is a binding site for Zn(2+). Residue Asp76 is part of the active site. Asp107 contacts Zn(2+). Glu141 functions as the Proton acceptor in the catalytic mechanism. Residues Glu142, Glu170, and His368 each coordinate Zn(2+).

Belongs to the peptidase M20A family. DapE subfamily. Homodimer. Requires Zn(2+) as cofactor. The cofactor is Co(2+).

The catalysed reaction is N-succinyl-(2S,6S)-2,6-diaminopimelate + H2O = (2S,6S)-2,6-diaminopimelate + succinate. Its pathway is amino-acid biosynthesis; L-lysine biosynthesis via DAP pathway; LL-2,6-diaminopimelate from (S)-tetrahydrodipicolinate (succinylase route): step 3/3. Functionally, catalyzes the hydrolysis of N-succinyl-L,L-diaminopimelic acid (SDAP), forming succinate and LL-2,6-diaminopimelate (DAP), an intermediate involved in the bacterial biosynthesis of lysine and meso-diaminopimelic acid, an essential component of bacterial cell walls. In Mesorhizobium japonicum (strain LMG 29417 / CECT 9101 / MAFF 303099) (Mesorhizobium loti (strain MAFF 303099)), this protein is Succinyl-diaminopimelate desuccinylase.